A 38-amino-acid polypeptide reads, in one-letter code: Photosystem II reaction center protein L (38 aa).

The helical transmembrane segment at 17 to 37 threads the bilayer; that stretch reads SLYWGLLLMFVLAVLFSSYFF.

Belongs to the PsbL family. PSII is composed of 1 copy each of membrane proteins PsbA, PsbB, PsbC, PsbD, PsbE, PsbF, PsbH, PsbI, PsbJ, PsbK, PsbL, PsbM, PsbT, PsbX, PsbY, PsbZ, Psb30/Ycf12, at least 3 peripheral proteins of the oxygen-evolving complex and a large number of cofactors. It forms dimeric complexes.

Its subcellular location is the plastid. The protein resides in the chloroplast thylakoid membrane. Functionally, one of the components of the core complex of photosystem II (PSII). PSII is a light-driven water:plastoquinone oxidoreductase that uses light energy to abstract electrons from H(2)O, generating O(2) and a proton gradient subsequently used for ATP formation. It consists of a core antenna complex that captures photons, and an electron transfer chain that converts photonic excitation into a charge separation. This subunit is found at the monomer-monomer interface and is required for correct PSII assembly and/or dimerization. The sequence is that of Photosystem II reaction center protein L from Emiliania huxleyi (Coccolithophore).